We begin with the raw amino-acid sequence, 339 residues long: RNA 3'-terminal phosphate cyclase (339 aa).

ATP-binding positions include Gln-101 and 283–286 (HMSD). His-307 serves as the catalytic Tele-AMP-histidine intermediate.

This sequence belongs to the RNA 3'-terminal cyclase family. Type 1 subfamily.

The protein localises to the cytoplasm. The catalysed reaction is a 3'-end 3'-phospho-ribonucleotide-RNA + ATP = a 3'-end 2',3'-cyclophospho-ribonucleotide-RNA + AMP + diphosphate. Its function is as follows. Catalyzes the conversion of 3'-phosphate to a 2',3'-cyclic phosphodiester at the end of RNA. The mechanism of action of the enzyme occurs in 3 steps: (A) adenylation of the enzyme by ATP; (B) transfer of adenylate to an RNA-N3'P to produce RNA-N3'PP5'A; (C) and attack of the adjacent 2'-hydroxyl on the 3'-phosphorus in the diester linkage to produce the cyclic end product. The biological role of this enzyme is unknown but it is likely to function in some aspects of cellular RNA processing. In Sulfurisphaera tokodaii (strain DSM 16993 / JCM 10545 / NBRC 100140 / 7) (Sulfolobus tokodaii), this protein is RNA 3'-terminal phosphate cyclase.